The chain runs to 209 residues: uncharacterized protein (209 aa).

The stretch at 13–75 (LSAVDKQMDT…AINLAAVMTD (63 aa)) forms a coiled coil. The disordered stretch occupies residues 107–135 (ATPLPSSNTNNEQSMSTYSSSISGKTSET). The span at 110-119 (LPSSNTNNEQ) shows a compositional bias: polar residues. The span at 120 to 133 (SMSTYSSSISGKTS) shows a compositional bias: low complexity.

The protein belongs to the asfivirus K205R family.

The protein resides in the host cytoplasm. Induces host endoplasmic reticulum stress and consequently activates autophagy and NF-kappa-B signaling pathway. In turn, may induce autophagy-mediated STING1 degradation and innate immune evasion. This is an uncharacterized protein from Ornithodoros (relapsing fever ticks).